A 430-amino-acid polypeptide reads, in one-letter code: Glutamate-1-semialdehyde 2,1-aminomutase (430 aa).

The residue at position 270 (K270) is an N6-(pyridoxal phosphate)lysine.

Belongs to the class-III pyridoxal-phosphate-dependent aminotransferase family. HemL subfamily. In terms of assembly, homodimer. It depends on pyridoxal 5'-phosphate as a cofactor.

The protein localises to the cytoplasm. The catalysed reaction is (S)-4-amino-5-oxopentanoate = 5-aminolevulinate. Its pathway is porphyrin-containing compound metabolism; protoporphyrin-IX biosynthesis; 5-aminolevulinate from L-glutamyl-tRNA(Glu): step 2/2. In Cupriavidus metallidurans (strain ATCC 43123 / DSM 2839 / NBRC 102507 / CH34) (Ralstonia metallidurans), this protein is Glutamate-1-semialdehyde 2,1-aminomutase.